We begin with the raw amino-acid sequence, 2135 residues long: Plexin-B1 (2135 aa).

Positions 1–19 are cleaved as a signal peptide; the sequence is MPALGPALLQALWAGWVLT. In terms of domain architecture, Sema spans 20–479; it reads LQPLPPTAFT…TQSTLLKVPV (460 aa). At 20–1490 the chain is on the extracellular side; sequence LQPLPPTAFT…SPGAFPVAAQ (1471 aa). Asn31 carries an N-linked (GlcNAc...) asparagine glycan. 9 disulfides stabilise this stretch: Cys79–Cys88, Cys111–Cys119, Cys252–Cys377, Cys268–Cys322, Cys340–Cys364, Cys482–Cys499, Cys488–Cys533, Cys491–Cys508, and Cys502–Cys514. The N-linked (GlcNAc...) asparagine glycan is linked to Asn334. Asn543 carries an N-linked (GlcNAc...) asparagine glycan. A disulfide bridge links Cys570 with Cys588. 2 disordered regions span residues 671 to 829 and 849 to 884; these read MVAS…TTFP and LPEA…PPAP. The segment covering 681–697 has biased composition (pro residues); that stretch reads SPDPPARGGPSPSPPTA. 2 stretches are compositionally biased toward low complexity: residues 698 to 710 and 734 to 754; these read PKAL…DTLP and SPWG…TGSP. IPT/TIG domains lie at 1070 to 1160, 1162 to 1249, and 1252 to 1375; these read PLIH…FAYQ, PKVH…FKYT, and PNIT…FSYE. N-linked (GlcNAc...) asparagine glycans are attached at residues Asn1183, Asn1253, and Asn1330. Residues 1491 to 1511 form a helical membrane-spanning segment; it reads VGLGVGTSLLALGVIIIVLMY. The stretch at 1507 to 1539 forms a coiled coil; the sequence is IVLMYRRKSKQALRDYKKVQIQLENLESSVRDR. The Cytoplasmic segment spans residues 1512-2135; sequence RRKSKQALRD…AAVENKVTDL (624 aa). A disordered region spans residues 1883–1908; that stretch reads PWHLVKPSDEPEPPRPRRGSLRGGER. The span at 1888–1897 shows a compositional bias: basic and acidic residues; that stretch reads KPSDEPEPPR.

Belongs to the plexin family. Monomer, and heterodimer with PLXNB2 after proteolytic processing. Binds RAC1 that has been activated by GTP binding. Interaction with SEMA4D promotes binding of cytoplasmic ligands. Interacts with PLXNA1. Interacts with ARHGEF11 and ARHGEF12. Interacts with ERBB2. Interacts with MET. Interacts with MST1R. Interacts with RRAS. Interacts with RHOD. Interacts with RND1. Interacts with NRP1 and NRP2. In terms of processing, phosphorylated on tyrosine residues by ERBB2 and MET upon SEMA4D binding. Proteolytic processing favors heterodimerization with PLXNB2 and SEMA4D binding. In terms of tissue distribution, highly expressed in fetal kidney, and at slightly lower levels in fetal brain, lung and liver.

The protein localises to the cell membrane. It is found in the secreted. Functionally, receptor for SEMA4D. Plays a role in GABAergic synapse development. Mediates SEMA4A- and SEMA4D-dependent inhibitory synapse development. Plays a role in RHOA activation and subsequent changes of the actin cytoskeleton. Plays a role in axon guidance, invasive growth and cell migration. In Homo sapiens (Human), this protein is Plexin-B1 (PLXNB1).